The chain runs to 130 residues: Small ribosomal subunit protein uS11 (130 aa).

Belongs to the universal ribosomal protein uS11 family. As to quaternary structure, part of the 30S ribosomal subunit. Interacts with proteins S7 and S18. Binds to IF-3.

Functionally, located on the platform of the 30S subunit, it bridges several disparate RNA helices of the 16S rRNA. Forms part of the Shine-Dalgarno cleft in the 70S ribosome. The protein is Small ribosomal subunit protein uS11 of Nitrobacter hamburgensis (strain DSM 10229 / NCIMB 13809 / X14).